The sequence spans 75 residues: Small ribosomal subunit protein bS18 (75 aa).

N-acetylalanine is present on Ala-2.

Belongs to the bacterial ribosomal protein bS18 family. As to quaternary structure, part of the 30S ribosomal subunit. Forms a tight heterodimer with protein bS6.

Its function is as follows. Binds as a heterodimer with protein bS6 to the central domain of the 16S rRNA, where it helps stabilize the platform of the 30S subunit. In Salmonella typhimurium (strain LT2 / SGSC1412 / ATCC 700720), this protein is Small ribosomal subunit protein bS18 (rpsR).